Consider the following 148-residue polypeptide: Basic leucine zipper 4 (148 aa).

The 50-residue stretch at 48 to 97 (DDKKRRRTISNRESAKRSRMKKKKRFEELTEEVNRLNIRNQELKNRLANV) folds into the bZIP domain. Residues 50-70 (KKRRRTISNRESAKRSRMKKK) are disordered. A basic motif region spans residues 50–72 (KKRRRTISNRESAKRSRMKKKKR). The leucine-zipper stretch occupies residues 76 to 90 (LTEEVNRLNIRNQEL).

The protein resides in the nucleus. Functionally, probable transcription factor involved in somatic embryogenesis. Acts as a positive regulator of BHLH109. This is Basic leucine zipper 4 from Arabidopsis thaliana (Mouse-ear cress).